Consider the following 285-residue polypeptide: Sulfoquinovosyl glycerol transport system permease protein SmoH (285 aa).

6 consecutive transmembrane segments (helical) span residues 21–41 (FIAA…ILFT), 83–103 (FMVA…AAYA), 115–135 (ILSL…VPLF), 150–170 (LILP…VSFF), 195–215 (VVVP…FVNA), and 250–270 (PVIS…IVIF). The 192-residue stretch at 79–270 (LFNSFMVALL…VPVAILIVIF (192 aa)) folds into the ABC transmembrane type-1 domain.

The protein belongs to the binding-protein-dependent transport system permease family. The complex is probably composed of two ATP-binding proteins (SmoE), two transmembrane proteins (SmoG and SmoH) and a solute-binding protein (SmoF).

It localises to the cell inner membrane. Part of the ABC transporter complex SmoEFGH involved in sulfoquinovosyl glycerol (SQGro) uptake. Responsible for the translocation of the substrate across the membrane. The protein is Sulfoquinovosyl glycerol transport system permease protein SmoH of Agrobacterium fabrum (strain C58 / ATCC 33970) (Agrobacterium tumefaciens (strain C58)).